A 132-amino-acid chain; its full sequence is Ribosome-binding factor A (132 aa).

Belongs to the RbfA family. Monomer. Binds 30S ribosomal subunits, but not 50S ribosomal subunits or 70S ribosomes.

Its subcellular location is the cytoplasm. Its function is as follows. One of several proteins that assist in the late maturation steps of the functional core of the 30S ribosomal subunit. Associates with free 30S ribosomal subunits (but not with 30S subunits that are part of 70S ribosomes or polysomes). Required for efficient processing of 16S rRNA. May interact with the 5'-terminal helix region of 16S rRNA. In Treponema denticola (strain ATCC 35405 / DSM 14222 / CIP 103919 / JCM 8153 / KCTC 15104), this protein is Ribosome-binding factor A.